The sequence spans 525 residues: MDYQYFEEESDYIDLDEEEEDDDVVTAGSLDHRFGQPNGEEDYYFGGDDVEEELVVDGHGVLELAGRLLESLQSCVQPSVLQVMQYVAPMLLLCLLCRLLCLLYSQRRRLTSLAPLHLFHFACGLIILQITVGYRLLLLLLLAAVGYLLLQLLRLGRRGAQVLAVLTVGSQFLYELLIWRRRSDWPQLRGIQMVVNMKLISLGFDLTASGQLQARIPGPFAYLGYIYSPATCALGPWVSFGCYMDCLVPRNSWLVSLRRLLPNVVICVLAVTVSNCVAPALSDFFGDSSHFLVMYWDALSVRSSHYFVGMMAQALLVASDQRLDGATKESDMLGPLISQPWRIEWPRSISSLVRSWNIPMHEWLKRYIYAPCKPTASTSRGRILVVVLSTYLVSSLLHGMDLRIYLVLISLAFLAEGESLLRRQLASLLNACITANLCPGKERCRYSHCPSKRRLNSLSYWLARLTNLAFTALAIFHLAYLGVVLLGDDLEVGEDGDSFLWHWQQAGYLSHYIGLGTFVLYLFIS.

9 helical membrane-spanning segments follow: residues 83–103 (VMQY…LCLL), 125–145 (LIIL…LAAV), 159–179 (GAQV…LLIW), 220–240 (FAYL…WVSF), 260–280 (LLPN…VAPA), 301–318 (VRSS…LLVA), 395–415 (SLLH…AFLA), 467–487 (NLAF…VLLG), and 505–525 (QAGY…LFIS). Residue histidine 398 is part of the active site.

This sequence belongs to the membrane-bound acyltransferase family. Porcupine subfamily. In terms of assembly, interacts with wg and Wnt5.

The protein resides in the endoplasmic reticulum membrane. It carries out the reaction [Wnt protein]-L-serine + (9Z)-hexadecenoyl-CoA = [Wnt protein]-O-(9Z)-hexadecenoyl-L-serine + CoA. Protein-serine O-palmitoleoyltransferase that acts as a key regulator of the Wnt signaling pathway by mediating the attachment of palmitoleate, a 16-carbon monounsaturated fatty acid (C16:1(9Z)), to Wnt proteins. Serine palmitoleoylation of Wnt proteins is required for efficient binding to frizzled receptors. Also facilitates the glycosylation of Wnt family members, including wg and Wnt5. The cotranslational disulfide bond formation of wg competes with the N-glycosylation. Porc stimulates the post-translational N-glycosylation by anchoring wg at the ER membrane, probably through acylation. This is Protein-serine O-palmitoleoyltransferase porcupine from Drosophila melanogaster (Fruit fly).